Consider the following 701-residue polypeptide: Polyribonucleotide nucleotidyltransferase (701 aa).

Mg(2+) contacts are provided by D487 and D493. Residues 554–613 enclose the KH domain; that stretch reads PTMIAMKIDTDKIRDVIGKGGATIRAICEETKASIDIEDDGSIKIFGETKEAAEAAKQRI. Positions 623–691 constitute an S1 motif domain; the sequence is GKIYVGKVER…NRGRIKLSIK (69 aa).

It belongs to the polyribonucleotide nucleotidyltransferase family. Component of the RNA degradosome, which is a multiprotein complex involved in RNA processing and mRNA degradation. The cofactor is Mg(2+).

Its subcellular location is the cytoplasm. It carries out the reaction RNA(n+1) + phosphate = RNA(n) + a ribonucleoside 5'-diphosphate. In terms of biological role, involved in mRNA degradation. Catalyzes the phosphorolysis of single-stranded polyribonucleotides processively in the 3'- to 5'-direction. This chain is Polyribonucleotide nucleotidyltransferase, found in Pseudomonas putida (strain GB-1).